We begin with the raw amino-acid sequence, 123 residues long: Holo-[acyl-carrier-protein] synthase (123 aa).

Mg(2+)-binding residues include D8 and E56.

Belongs to the P-Pant transferase superfamily. AcpS family. The cofactor is Mg(2+).

It localises to the cytoplasm. It catalyses the reaction apo-[ACP] + CoA = holo-[ACP] + adenosine 3',5'-bisphosphate + H(+). Functionally, transfers the 4'-phosphopantetheine moiety from coenzyme A to a Ser of acyl-carrier-protein. This chain is Holo-[acyl-carrier-protein] synthase, found in Clostridium botulinum (strain Eklund 17B / Type B).